We begin with the raw amino-acid sequence, 473 residues long: Cysteine--tRNA ligase (473 aa).

Cys-28 serves as a coordination point for Zn(2+). The 'HIGH' region motif lies at 30–40 (MTVYDFCHIGH). Cys-212, His-237, and Glu-241 together coordinate Zn(2+). The 'KMSKS' region motif lies at 277-281 (KMSKS). Lys-280 lines the ATP pocket.

It belongs to the class-I aminoacyl-tRNA synthetase family. Monomer. Zn(2+) serves as cofactor.

Its subcellular location is the cytoplasm. The catalysed reaction is tRNA(Cys) + L-cysteine + ATP = L-cysteinyl-tRNA(Cys) + AMP + diphosphate. This Polynucleobacter asymbioticus (strain DSM 18221 / CIP 109841 / QLW-P1DMWA-1) (Polynucleobacter necessarius subsp. asymbioticus) protein is Cysteine--tRNA ligase.